The following is a 202-amino-acid chain: Pyridoxal 5'-phosphate synthase subunit PdxT (202 aa).

52-54 (GES) contributes to the L-glutamine binding site. The Nucleophile role is filled by Cys84. Residues Arg120 and 148–149 (IR) each bind L-glutamine. Residues His185 and Glu187 each act as charge relay system in the active site.

The protein belongs to the glutaminase PdxT/SNO family. In the presence of PdxS, forms a dodecamer of heterodimers. Only shows activity in the heterodimer.

It catalyses the reaction aldehydo-D-ribose 5-phosphate + D-glyceraldehyde 3-phosphate + L-glutamine = pyridoxal 5'-phosphate + L-glutamate + phosphate + 3 H2O + H(+). The catalysed reaction is L-glutamine + H2O = L-glutamate + NH4(+). Its pathway is cofactor biosynthesis; pyridoxal 5'-phosphate biosynthesis. Catalyzes the hydrolysis of glutamine to glutamate and ammonia as part of the biosynthesis of pyridoxal 5'-phosphate. The resulting ammonia molecule is channeled to the active site of PdxS. The sequence is that of Pyridoxal 5'-phosphate synthase subunit PdxT from Methanopyrus kandleri (strain AV19 / DSM 6324 / JCM 9639 / NBRC 100938).